We begin with the raw amino-acid sequence, 308 residues long: Shikimate kinase 1, chloroplastic (308 aa).

The N-terminal 62 residues, 1-62 (MEAGVGLALQ…RGSKPVAPLR (62 aa)), are a transit peptide targeting the chloroplast. 103-110 (GMMGSGKS) contacts ATP. Ser110 contributes to the Mg(2+) binding site. Positions 128, 153, and 175 each coordinate substrate. An ATP-binding site is contributed by Arg214.

Belongs to the shikimate kinase family. Requires Mg(2+) as cofactor. Expressed in panicles.

It is found in the plastid. It localises to the chloroplast. The enzyme catalyses shikimate + ATP = 3-phosphoshikimate + ADP + H(+). The protein operates within metabolic intermediate biosynthesis; chorismate biosynthesis; chorismate from D-erythrose 4-phosphate and phosphoenolpyruvate: step 5/7. Functionally, catalyzes the specific phosphorylation of the 3-hydroxyl group of shikimic acid using ATP as a cosubstrate. This is Shikimate kinase 1, chloroplastic (SK1) from Oryza sativa subsp. japonica (Rice).